Reading from the N-terminus, the 370-residue chain is Quinolinate synthase (370 aa).

The iminosuccinate site is built by H62 and S83. C128 contacts [4Fe-4S] cluster. Iminosuccinate is bound by residues 154–156 (YAN) and S171. C215 is a binding site for [4Fe-4S] cluster. Iminosuccinate is bound by residues 241 to 243 (HPE) and T258. C312 lines the [4Fe-4S] cluster pocket.

Belongs to the quinolinate synthase family. Type 1 subfamily. The cofactor is [4Fe-4S] cluster.

Its subcellular location is the cytoplasm. The enzyme catalyses iminosuccinate + dihydroxyacetone phosphate = quinolinate + phosphate + 2 H2O + H(+). It participates in cofactor biosynthesis; NAD(+) biosynthesis; quinolinate from iminoaspartate: step 1/1. In terms of biological role, catalyzes the condensation of iminoaspartate with dihydroxyacetone phosphate to form quinolinate. The polypeptide is Quinolinate synthase (Neisseria meningitidis serogroup C / serotype 2a (strain ATCC 700532 / DSM 15464 / FAM18)).